The chain runs to 177 residues: Peptidyl-tRNA hydrolase 1 (177 aa).

Tyr-18 provides a ligand contact to tRNA. The Proton acceptor role is filled by His-23. 3 residues coordinate tRNA: Phe-65, Asn-67, and Asn-113.

Belongs to the PTH family. As to quaternary structure, monomer.

The protein resides in the cytoplasm. The enzyme catalyses an N-acyl-L-alpha-aminoacyl-tRNA + H2O = an N-acyl-L-amino acid + a tRNA + H(+). Hydrolyzes ribosome-free peptidyl-tRNAs (with 1 or more amino acids incorporated), which drop off the ribosome during protein synthesis, or as a result of ribosome stalling. In terms of biological role, catalyzes the release of premature peptidyl moieties from peptidyl-tRNA molecules trapped in stalled 50S ribosomal subunits, and thus maintains levels of free tRNAs and 50S ribosomes. The protein is Peptidyl-tRNA hydrolase 1 of Corynebacterium glutamicum (strain ATCC 13032 / DSM 20300 / JCM 1318 / BCRC 11384 / CCUG 27702 / LMG 3730 / NBRC 12168 / NCIMB 10025 / NRRL B-2784 / 534).